The sequence spans 216 residues: Redox-sensing transcriptional repressor Rex (216 aa).

The H-T-H motif DNA-binding region spans 17-56 (IYFRYLTFLHDAGTDRISSAELSDAIKFDAATIRRDFSYF). Residue 91 to 96 (GAGNLG) participates in NAD(+) binding.

It belongs to the transcriptional regulatory Rex family. As to quaternary structure, homodimer.

The protein localises to the cytoplasm. Its function is as follows. Modulates transcription in response to changes in cellular NADH/NAD(+) redox state. The protein is Redox-sensing transcriptional repressor Rex of Leuconostoc citreum (strain KM20).